The sequence spans 397 residues: uncharacterized protein (397 aa).

The next 9 membrane-spanning stretches (helical) occupy residues methionine 1–valine 21, valine 39–phenylalanine 59, glutamate 76–proline 96, valine 103–alanine 123, alanine 124–alanine 144, methionine 194–phenylalanine 214, alanine 219–leucine 239, leucine 255–leucine 275, and glutamine 301–alanine 321.

It belongs to the TerC family.

The protein localises to the cell membrane. This is an uncharacterized protein from Mycobacterium bovis (strain ATCC BAA-935 / AF2122/97).